The sequence spans 220 residues: Adenylate kinase (220 aa).

Residue glycine 13–threonine 18 participates in ATP binding. The interval serine 33–valine 62 is NMP. Residues threonine 34, arginine 39, alanine 60–valine 62, glycine 88–arginine 91, and glutamine 95 contribute to the AMP site. Positions glycine 129–aspartate 170 are LID. Arginine 130 is a binding site for ATP. Residues cysteine 133 and cysteine 136 each coordinate Zn(2+). Isoleucine 139–phenylalanine 140 serves as a coordination point for ATP. Zn(2+) is bound by residues aspartate 156 and cysteine 160. Residues arginine 167 and arginine 178 each contribute to the AMP site. Arginine 206 is an ATP binding site.

This sequence belongs to the adenylate kinase family. Monomer.

It is found in the cytoplasm. It catalyses the reaction AMP + ATP = 2 ADP. Its pathway is purine metabolism; AMP biosynthesis via salvage pathway; AMP from ADP: step 1/1. Its function is as follows. Catalyzes the reversible transfer of the terminal phosphate group between ATP and AMP. Plays an important role in cellular energy homeostasis and in adenine nucleotide metabolism. This is Adenylate kinase from Gloeobacter violaceus (strain ATCC 29082 / PCC 7421).